Here is a 912-residue protein sequence, read N- to C-terminus: Protein translocase subunit SecA (912 aa).

ATP is bound by residues Gln87, 105–109, and Asp510; that span reads GEGKT. Residues 854 to 912 form a disordered region; the sequence is KLRHEQASAAQAEGEGDDGQQGQQATPETFVRQERKVGRNEPCPCGSGKKYKQCCGKVS. Zn(2+)-binding residues include Cys896, Cys898, Cys907, and Cys908.

The protein belongs to the SecA family. As to quaternary structure, monomer and homodimer. Part of the essential Sec protein translocation apparatus which comprises SecA, SecYEG and auxiliary proteins SecDF-YajC and YidC. Requires Zn(2+) as cofactor.

The protein resides in the cell inner membrane. It is found in the cytoplasm. The enzyme catalyses ATP + H2O + cellular proteinSide 1 = ADP + phosphate + cellular proteinSide 2.. Functionally, part of the Sec protein translocase complex. Interacts with the SecYEG preprotein conducting channel. Has a central role in coupling the hydrolysis of ATP to the transfer of proteins into and across the cell membrane, serving both as a receptor for the preprotein-SecB complex and as an ATP-driven molecular motor driving the stepwise translocation of polypeptide chains across the membrane. This is Protein translocase subunit SecA from Marinobacter nauticus (strain ATCC 700491 / DSM 11845 / VT8) (Marinobacter aquaeolei).